The sequence spans 624 residues: MSDNQSWNSSGSEEDPETESGPPVERCGVLSKWTNYIHGWQDRWVVLKNNALSYYKSEDETEYGCRGSICLSKAVITPHDFDECRFDISVNDSVWYLRAQDPDHRQQWIDAIEQHKTESGYGSESSLRRHGSMVSLVSGASGYSATSTSSFKKGHSLREKLAEMETFRDILCRQVDTLQKYFDACADAVSKDELQRDKVVEDDEDDFPTTRSDGDFLHSTNGNKEKLFPRVTPKGINGIDFKGEAITFKATTVGIPATLSHCIELMVKREDSWQKRLDKETEKKRRTEEAYKNAMTELKKKSHFGGPDYEEGPNSLINEEEFFDAVEAALDRQDEIEEQSQSEKVRLHWPTSLPSGDAFSSVGTHRFVQKPYSRSSSVSSIDLVSASDDVHRFSSQVEEMVQNHMTYSLQDVGGDANWQLVVEEGEMKVYRREVEENGIVLDPLKATRAVKGVTGHEVCNYFWNVDVRNDWETTIENFHVVETLADNAIIIYQTHKRVWPASQRDVLYLSVIRKIPALTENDPETWIVCNFSVDHDSAPLNNRCVRAKINVAMICQTLVSPPEGNQEISRDNILCKITYVANVNPGGWAPASVLRAVAKREYPKFLKRFTSYVQEKTAGKPILF.

The segment covering 1–11 has biased composition (polar residues); it reads MSDNQSWNSSG. Residues 1-24 form a disordered region; sequence MSDNQSWNSSGSEEDPETESGPPV. Residues 23-117 form the PH domain; the sequence is PVERCGVLSK…WIDAIEQHKT (95 aa). Ser-126 bears the Phosphoserine mark. Ser-132 carries the post-translational modification Phosphoserine; by PKD. The residue at position 135 (Ser-135) is a Phosphoserine. The stretch at 263-303 forms a coiled coil; that stretch reads IELMVKREDSWQKRLDKETEKKRRTEEAYKNAMTELKKKSH. A Phosphoserine modification is found at Ser-315. The short motif at 321–327 is the FFAT element; sequence EFFDAVE. Residue Tyr-372 is modified to Phosphotyrosine. 3 positions are modified to phosphoserine: Ser-373, Ser-377, and Ser-380. The START domain occupies 389 to 618; sequence DVHRFSSQVE…FTSYVQEKTA (230 aa). Residues Glu-472, Gln-493, Asn-530, and Tyr-579 each contribute to the an N-acylsphing-4-enine site.

As to quaternary structure, interacts with VAPA and VAPB. Interaction with VAPB is less efficient than with VAPA. Interacts (via FFAT motif) with the MOSPD2 (via MSP domain). Phosphorylation on Ser-132 decreases the affinity toward phosphatidylinositol 4-phosphate at Golgi membranes and reduces ceramide transfer activity. Inactivated by hyperphosphorylation of serine residues by CSNK1G2/CK1 that triggers dissociation from the Golgi complex, thus down-regulating ER-to-Golgi transport of ceramide and sphingomyelin synthesis.

It localises to the cytoplasm. The protein localises to the golgi apparatus. Its subcellular location is the endoplasmic reticulum. It carries out the reaction N-hexadecanoylsphing-4-enine(in) = N-hexadecanoylsphing-4-enine(out). Shelters ceramides and diacylglycerol lipids inside its START domain and mediates the intracellular trafficking of ceramides and diacylglycerol lipids in a non-vesicular manner. This chain is Ceramide transfer protein (CERT1), found in Pongo abelii (Sumatran orangutan).